The primary structure comprises 431 residues: Glycerol-3-phosphate dehydrogenase [NAD(P)+] (431 aa).

NADPH is bound by residues Ser-79, Phe-80, Arg-100, and Lys-173. Lys-173 and Gly-201 together coordinate sn-glycerol 3-phosphate. Ala-205 contacts NADPH. Sn-glycerol 3-phosphate is bound by residues Lys-256, Asp-309, Ser-319, Arg-320, and Asn-321. Lys-256 acts as the Proton acceptor in catalysis. Arg-320 is a binding site for NADPH. Glu-346 serves as a coordination point for NADPH.

Belongs to the NAD-dependent glycerol-3-phosphate dehydrogenase family.

Its subcellular location is the cytoplasm. It carries out the reaction sn-glycerol 3-phosphate + NAD(+) = dihydroxyacetone phosphate + NADH + H(+). The catalysed reaction is sn-glycerol 3-phosphate + NADP(+) = dihydroxyacetone phosphate + NADPH + H(+). It participates in membrane lipid metabolism; glycerophospholipid metabolism. In terms of biological role, catalyzes the reduction of the glycolytic intermediate dihydroxyacetone phosphate (DHAP) to sn-glycerol 3-phosphate (G3P), the key precursor for phospholipid synthesis. The chain is Glycerol-3-phosphate dehydrogenase [NAD(P)+] from Psychrobacter cryohalolentis (strain ATCC BAA-1226 / DSM 17306 / VKM B-2378 / K5).